Here is a 938-residue protein sequence, read N- to C-terminus: Isoleucine--tRNA ligase (938 aa).

A 'HIGH' region motif is present at residues Pro58 to His68. Glu566 is an L-isoleucyl-5'-AMP binding site. Positions Lys607–Ser611 match the 'KMSKS' region motif. Lys610 contributes to the ATP binding site. Zn(2+) contacts are provided by Cys906, Cys909, Cys926, and Cys929.

Belongs to the class-I aminoacyl-tRNA synthetase family. IleS type 1 subfamily. As to quaternary structure, monomer. Zn(2+) is required as a cofactor.

The protein localises to the cytoplasm. It catalyses the reaction tRNA(Ile) + L-isoleucine + ATP = L-isoleucyl-tRNA(Ile) + AMP + diphosphate. Its function is as follows. Catalyzes the attachment of isoleucine to tRNA(Ile). As IleRS can inadvertently accommodate and process structurally similar amino acids such as valine, to avoid such errors it has two additional distinct tRNA(Ile)-dependent editing activities. One activity is designated as 'pretransfer' editing and involves the hydrolysis of activated Val-AMP. The other activity is designated 'posttransfer' editing and involves deacylation of mischarged Val-tRNA(Ile). In Nitratidesulfovibrio vulgaris (strain ATCC 29579 / DSM 644 / CCUG 34227 / NCIMB 8303 / VKM B-1760 / Hildenborough) (Desulfovibrio vulgaris), this protein is Isoleucine--tRNA ligase.